Consider the following 540-residue polypeptide: Chaperonin GroEL (540 aa).

Residues Thr30 to Pro33, Asp87 to Thr91, Gly415, and Asp496 each bind ATP.

The protein belongs to the chaperonin (HSP60) family. In terms of assembly, forms a cylinder of 14 subunits composed of two heptameric rings stacked back-to-back. Interacts with the co-chaperonin GroES.

It is found in the cytoplasm. The catalysed reaction is ATP + H2O + a folded polypeptide = ADP + phosphate + an unfolded polypeptide.. Its function is as follows. Together with its co-chaperonin GroES, plays an essential role in assisting protein folding. The GroEL-GroES system forms a nano-cage that allows encapsulation of the non-native substrate proteins and provides a physical environment optimized to promote and accelerate protein folding. In Symbiobacterium thermophilum (strain DSM 24528 / JCM 14929 / IAM 14863 / T), this protein is Chaperonin GroEL.